The sequence spans 286 residues: KH domain-containing protein At2g38610 (286 aa).

At serine 2 the chain carries N-acetylserine. The KH domain occupies 141-208 (EIPVDNYPNF…EHLNEQLHIL (68 aa)). A disordered region spans residues 256 to 286 (SNNLREESPGPSGGGSVSPFNSSGKRPKTGC). 2 positions are modified to phosphoserine: serine 263 and serine 273.

Its subcellular location is the nucleus. This chain is KH domain-containing protein At2g38610, found in Arabidopsis thaliana (Mouse-ear cress).